A 348-amino-acid chain; its full sequence is Dihydroorotase (348 aa).

Residues His-17 and His-19 each coordinate Zn(2+). Substrate contacts are provided by residues 19–21 (HLR) and Asn-45. 3 residues coordinate Zn(2+): Lys-103, His-140, and His-178. Lys-103 is subject to N6-carboxylysine. His-140 provides a ligand contact to substrate. Residue Leu-223 coordinates substrate. Residue Asp-251 participates in Zn(2+) binding. Residue Asp-251 is part of the active site. The substrate site is built by His-255 and Ala-267.

This sequence belongs to the metallo-dependent hydrolases superfamily. DHOase family. Class II DHOase subfamily. Homodimer. The cofactor is Zn(2+).

It carries out the reaction (S)-dihydroorotate + H2O = N-carbamoyl-L-aspartate + H(+). It functions in the pathway pyrimidine metabolism; UMP biosynthesis via de novo pathway; (S)-dihydroorotate from bicarbonate: step 3/3. Functionally, catalyzes the reversible cyclization of carbamoyl aspartate to dihydroorotate. The chain is Dihydroorotase from Yersinia pseudotuberculosis serotype O:1b (strain IP 31758).